The primary structure comprises 566 residues: CTP synthase (566 aa).

Positions 1-270 (MTKFVFVTGG…DGLICDKLRL (270 aa)) are amidoligase domain. S13 serves as a coordination point for CTP. S13 contacts UTP. ATP is bound by residues 14-19 (SLGKGI) and D71. Residues D71 and E144 each contribute to the Mg(2+) site. CTP-binding positions include 151 to 153 (DIE), 191 to 196 (KTKPTQ), and K227. UTP-binding positions include 191–196 (KTKPTQ) and K227. The Glutamine amidotransferase type-1 domain occupies 295–547 (SIAMVGKYVD…IAATLEQRSA (253 aa)). G356 contacts L-glutamine. C383 (nucleophile; for glutamine hydrolysis) is an active-site residue. L-glutamine-binding positions include 384 to 387 (LGMQ), E407, and R473. Catalysis depends on residues H520 and E522.

The protein belongs to the CTP synthase family. As to quaternary structure, homotetramer.

It catalyses the reaction UTP + L-glutamine + ATP + H2O = CTP + L-glutamate + ADP + phosphate + 2 H(+). It carries out the reaction L-glutamine + H2O = L-glutamate + NH4(+). The catalysed reaction is UTP + NH4(+) + ATP = CTP + ADP + phosphate + 2 H(+). Its pathway is pyrimidine metabolism; CTP biosynthesis via de novo pathway; CTP from UDP: step 2/2. Its activity is regulated as follows. Allosterically activated by GTP, when glutamine is the substrate; GTP has no effect on the reaction when ammonia is the substrate. The allosteric effector GTP functions by stabilizing the protein conformation that binds the tetrahedral intermediate(s) formed during glutamine hydrolysis. Inhibited by the product CTP, via allosteric rather than competitive inhibition. Functionally, catalyzes the ATP-dependent amination of UTP to CTP with either L-glutamine or ammonia as the source of nitrogen. Regulates intracellular CTP levels through interactions with the four ribonucleotide triphosphates. This chain is CTP synthase, found in Polaromonas naphthalenivorans (strain CJ2).